Reading from the N-terminus, the 420-residue chain is Protein disulfide isomerase CRELD1 (420 aa).

Positions 1–29 (MAPRSSRGIAPAMLCGLSLFLGFPGLVWV) are cleaved as a signal peptide. The Extracellular portion of the chain corresponds to 30–362 (QISVPPQSSP…GFFSEMTEDE (333 aa)). A CXXC motif is present at residues 46–49 (CHTC). Cystine bridges form between C46–C49, C155–C169, C163–C181, and C183–C192. The 41-residue stretch at 153–193 (LPCPGGAERPCGGYGHCEGEGTRGGSGHCDCQAGYGGEACG) folds into the EGF-like 1 domain. A glycan (N-linked (GlcNAc...) asparagine) is linked at N205. FU repeat units follow at residues 208–255 (HLVC…ERAS) and 268–315 (SYEC…AVCP). A CXXC motif is present at residues 278–281 (CLGC). 4 cysteine pairs are disulfide-bonded: C278-C281, C309-C321, C314-C330, and C332-C343. In terms of domain architecture, EGF-like 2; calcium-binding spans 305 to 344 (DVDECETAVCPGENQQCENTEGSYRCICADGYKQMEGICV). Residues 363-383 (LVVLQQMFFGVIICALATLAA) form a helical membrane-spanning segment. A topological domain (cytoplasmic) is located at residue K384. Residues 385-405 (GDLVFTAIFIGAVAAMTGYWL) form a helical membrane-spanning segment. The Extracellular portion of the chain corresponds to 406-420 (SERSDRVLEGFIKGR).

The protein belongs to the CRELD family.

Its subcellular location is the membrane. The catalysed reaction is Catalyzes the rearrangement of -S-S- bonds in proteins.. Functionally, protein disulfide isomerase. Promotes the localization of acetylcholine receptors (AChRs) to the plasma membrane. This chain is Protein disulfide isomerase CRELD1 (CRELD1), found in Bos taurus (Bovine).